A 189-amino-acid polypeptide reads, in one-letter code: Interferon alpha-5 (189 aa).

The signal sequence occupies residues 1–21 (MALPFVLLMALVVLNCKSICS). Disulfide bonds link cysteine 24-cysteine 122 and cysteine 52-cysteine 162.

The protein belongs to the alpha/beta interferon family.

It is found in the secreted. Its function is as follows. Produced by macrophages, IFN-alpha have antiviral activities. Interferon stimulates the production of two enzymes: a protein kinase and an oligoadenylate synthetase. In Homo sapiens (Human), this protein is Interferon alpha-5 (IFNA5).